A 173-amino-acid polypeptide reads, in one-letter code: Crossover junction endodeoxyribonuclease RuvC (173 aa).

Catalysis depends on residues aspartate 8, glutamate 67, and aspartate 139. Residues aspartate 8, glutamate 67, and aspartate 139 each coordinate Mg(2+).

Belongs to the RuvC family. As to quaternary structure, homodimer which binds Holliday junction (HJ) DNA. The HJ becomes 2-fold symmetrical on binding to RuvC with unstacked arms; it has a different conformation from HJ DNA in complex with RuvA. In the full resolvosome a probable DNA-RuvA(4)-RuvB(12)-RuvC(2) complex forms which resolves the HJ. Requires Mg(2+) as cofactor.

It localises to the cytoplasm. The catalysed reaction is Endonucleolytic cleavage at a junction such as a reciprocal single-stranded crossover between two homologous DNA duplexes (Holliday junction).. The RuvA-RuvB-RuvC complex processes Holliday junction (HJ) DNA during genetic recombination and DNA repair. Endonuclease that resolves HJ intermediates. Cleaves cruciform DNA by making single-stranded nicks across the HJ at symmetrical positions within the homologous arms, yielding a 5'-phosphate and a 3'-hydroxyl group; requires a central core of homology in the junction. The consensus cleavage sequence is 5'-(A/T)TT(C/G)-3'. Cleavage occurs on the 3'-side of the TT dinucleotide at the point of strand exchange. HJ branch migration catalyzed by RuvA-RuvB allows RuvC to scan DNA until it finds its consensus sequence, where it cleaves and resolves the cruciform DNA. This Klebsiella pneumoniae (strain 342) protein is Crossover junction endodeoxyribonuclease RuvC.